Consider the following 541-residue polypeptide: Solute carrier family 22 member 10 (541 aa).

The Cytoplasmic portion of the chain corresponds to 1 to 15; that stretch reads MAFEELLSQVGGLGR. The helical transmembrane segment at 16-36 threads the bilayer; it reads FQMLHLVFILPSLMLLIPHIL. Topologically, residues 37 to 145 are extracellular; that stretch reads LENFAAAIPG…DLVCDYQSLK (109 aa). Asn56 and Asn102 each carry an N-linked (GlcNAc...) asparagine glycan. Residues 146-166 form a helical membrane-spanning segment; the sequence is SVVQFLLLTGMLVGGIIGGHV. Residues 167 to 193 lie on the Cytoplasmic side of the membrane; sequence SDRFGRRFILRWCLLQLAITDTCAAFA. A helical transmembrane segment spans residues 194-214; sequence PTFPVYCVLRFLAGFSSMIII. The Extracellular segment spans residues 215–230; the sequence is SNNSLPITEWIRPNSK. Residues 231 to 251 form a helical membrane-spanning segment; that stretch reads ALVVILSSGALSIGQIILGGL. Over 252–259 the chain is Cytoplasmic; it reads AYVFRDWQ. A helical transmembrane segment spans residues 260–280; it reads TLHVVASVPFFVFFLLSRWLV. Topologically, residues 281 to 349 are extracellular; that stretch reads ESARWLIITN…LFRNPSMRKR (69 aa). Residues 350-370 form a helical membrane-spanning segment; sequence ICILVFLRFANTIPFYGTMVN. The Cytoplasmic segment spans residues 371–377; that stretch reads LQHVGSN. Residues 378–398 traverse the membrane as a helical segment; the sequence is IFLLQVLYGAVALIVRCLALL. The Extracellular portion of the chain corresponds to 399–406; sequence TLNHMGRR. Residues 407–427 traverse the membrane as a helical segment; that stretch reads ISQILFMFLVGLSILANTFVP. At 428 to 436 the chain is on the cytoplasmic side; that stretch reads KEMQTLRVA. Residues 437–457 form a helical membrane-spanning segment; the sequence is LACLGIGCSAATFSSVAVHFI. Topologically, residues 458–472 are extracellular; sequence ELIPTVLRARASGID. A helical membrane pass occupies residues 473 to 493; that stretch reads LTASRIGAALAPLLMTLTVFF. At 494–495 the chain is on the cytoplasmic side; the sequence is TT. The helical transmembrane segment at 496–516 threads the bilayer; the sequence is LPWIIYGIFPIIGGLIVFLLP. Topologically, residues 517–541 are extracellular; it reads ETKNLPLPDTIKDVENQKKNLKEKA.

The protein belongs to the major facilitator (TC 2.A.1) superfamily. Organic cation transporter (TC 2.A.1.19) family. As to expression, detected in fetal and adult liver, and in adult kidney.

The protein localises to the membrane. The sequence is that of Solute carrier family 22 member 10 (SLC22A10) from Homo sapiens (Human).